A 99-amino-acid polypeptide reads, in one-letter code: CLAVATA3/ESR (CLE)-related protein 17 (99 aa).

A signal peptide spans methionine 1–methionine 21. A compositionally biased stretch (basic and acidic residues) spans leucine 77–valine 89. Residues leucine 77–asparagine 99 are disordered. Position 94 is a hydroxyproline (proline 94). The O-linked (Ara...) hydroxyproline glycan is linked to proline 94.

This sequence belongs to the CLV3/ESR signal peptide family. Post-translationally, the O-glycosylation (arabinosylation) of the hydroxyproline Pro-94 enhances binding affinity of the CLE17p peptide for its receptor. In terms of tissue distribution, mostly expressed in seedlings, roots, flowers, stems and apex, and, to a lower extent, in leaves and siliques.

The protein resides in the secreted. Its subcellular location is the extracellular space. Extracellular signal peptide that regulates cell fate. Represses root apical meristem maintenance. Regulates the transition of protophloem cells from proliferation to differentiation, thus impinging on postembryonic growth capacity of the root meristem; this signaling pathway requires CRN and CLV2. The sequence is that of CLAVATA3/ESR (CLE)-related protein 17 from Arabidopsis thaliana (Mouse-ear cress).